We begin with the raw amino-acid sequence, 2280 residues long: Acetyl-CoA carboxylase (2280 aa).

The Biotin carboxylation domain maps to 68 to 577 (VITSILIANN…TTGWLDRLIA (510 aa)). In terms of domain architecture, ATP-grasp spans 226 to 418 (ETNIVTVDDD…LPAAQLQVAM (193 aa)). 266-271 (GGGGKG) contributes to the ATP binding site. Residues glutamate 375, glutamate 389, and asparagine 391 each contribute to the Mn(2+) site. Residue arginine 393 is part of the active site. The Biotinyl-binding domain maps to 704–778 (LEQENDPTQL…DAGDILGILT (75 aa)). Lysine 745 is modified (N6-biotinyllysine). Phosphoserine occurs at positions 1179 and 1181. The 340-residue stretch at 1524–1863 (PYPTKEWLQP…KRNNPVPISP (340 aa)) folds into the CoA carboxyltransferase N-terminal domain. A carboxyltransferase region spans residues 1524-2181 (PYPTKEWLQP…EHYALQKITQ (658 aa)). CoA is bound by residues arginine 1772, lysine 2074, and arginine 2076. One can recognise a CoA carboxyltransferase C-terminal domain in the interval 1867–2181 (TWDRDVEFYP…EHYALQKITQ (315 aa)).

Interacts with sad1. Requires biotin as cofactor. Mn(2+) serves as cofactor.

The protein resides in the cytoplasm. The catalysed reaction is hydrogencarbonate + acetyl-CoA + ATP = malonyl-CoA + ADP + phosphate + H(+). It catalyses the reaction N(6)-biotinyl-L-lysyl-[protein] + hydrogencarbonate + ATP = N(6)-carboxybiotinyl-L-lysyl-[protein] + ADP + phosphate + H(+). Its pathway is lipid metabolism; malonyl-CoA biosynthesis; malonyl-CoA from acetyl-CoA: step 1/1. With respect to regulation, by phosphorylation. Its function is as follows. Carries out three functions: biotin carboxyl carrier protein, biotin carboxylase and carboxyltransferase. This chain is Acetyl-CoA carboxylase (cut6), found in Schizosaccharomyces pombe (strain 972 / ATCC 24843) (Fission yeast).